The following is a 279-amino-acid chain: Energy-coupling factor transporter ATP-binding protein EcfA (279 aa).

In terms of domain architecture, ABC transporter spans 4-239 (VETKDLYFRY…VETIRKANLR (236 aa)). 37-44 (GPNGAGKS) provides a ligand contact to ATP.

Belongs to the ABC transporter superfamily. Energy-coupling factor EcfA family. In terms of assembly, forms a stable energy-coupling factor (ECF) transporter complex composed of 2 membrane-embedded substrate-binding proteins (S component), 2 ATP-binding proteins (A component) and 2 transmembrane proteins (T component).

The protein resides in the cell membrane. In terms of biological role, ATP-binding (A) component of a common energy-coupling factor (ECF) ABC-transporter complex. Unlike classic ABC transporters this ECF transporter provides the energy necessary to transport a number of different substrates. The chain is Energy-coupling factor transporter ATP-binding protein EcfA from Methanocaldococcus jannaschii (strain ATCC 43067 / DSM 2661 / JAL-1 / JCM 10045 / NBRC 100440) (Methanococcus jannaschii).